Consider the following 249-residue polypeptide: Methylthioribulose-1-phosphate dehydratase (249 aa).

Positions 103 and 105 each coordinate Zn(2+).

Belongs to the aldolase class II family. MtnB subfamily. The cofactor is Zn(2+).

The catalysed reaction is 5-(methylsulfanyl)-D-ribulose 1-phosphate = 5-methylsulfanyl-2,3-dioxopentyl phosphate + H2O. The protein operates within amino-acid biosynthesis; L-methionine biosynthesis via salvage pathway; L-methionine from S-methyl-5-thio-alpha-D-ribose 1-phosphate: step 2/6. Functionally, catalyzes the dehydration of methylthioribulose-1-phosphate (MTRu-1-P) into 2,3-diketo-5-methylthiopentyl-1-phosphate (DK-MTP-1-P). This is Methylthioribulose-1-phosphate dehydratase from Leptospira interrogans serogroup Icterohaemorrhagiae serovar Lai (strain 56601).